Consider the following 444-residue polypeptide: Probable glycine dehydrogenase (decarboxylating) subunit 1 (444 aa).

This sequence belongs to the GcvP family. N-terminal subunit subfamily. In terms of assembly, the glycine cleavage system is composed of four proteins: P, T, L and H. In this organism, the P 'protein' is a heterodimer of two subunits.

It catalyses the reaction N(6)-[(R)-lipoyl]-L-lysyl-[glycine-cleavage complex H protein] + glycine + H(+) = N(6)-[(R)-S(8)-aminomethyldihydrolipoyl]-L-lysyl-[glycine-cleavage complex H protein] + CO2. The glycine cleavage system catalyzes the degradation of glycine. The P protein binds the alpha-amino group of glycine through its pyridoxal phosphate cofactor; CO(2) is released and the remaining methylamine moiety is then transferred to the lipoamide cofactor of the H protein. This chain is Probable glycine dehydrogenase (decarboxylating) subunit 1, found in Chlorobaculum parvum (strain DSM 263 / NCIMB 8327) (Chlorobium vibrioforme subsp. thiosulfatophilum).